Reading from the N-terminus, the 112-residue chain is Cell cycle protein GpsB (112 aa).

The stretch at 38–72 (IKDYEAFHKEFEQLKQQNARLKRELEEQKLAATQV) forms a coiled coil.

Belongs to the GpsB family. Forms polymers through the coiled coil domains. Interacts with PBP1, MreC and EzrA.

The protein resides in the cytoplasm. Divisome component that associates with the complex late in its assembly, after the Z-ring is formed, and is dependent on DivIC and PBP2B for its recruitment to the divisome. Together with EzrA, is a key component of the system that regulates PBP1 localization during cell cycle progression. Its main role could be the removal of PBP1 from the cell pole after pole maturation is completed. Also contributes to the recruitment of PBP1 to the division complex. Not essential for septum formation. The polypeptide is Cell cycle protein GpsB (Bacillus anthracis (strain A0248)).